Consider the following 362-residue polypeptide: tRNA/tmRNA (uracil-C(5))-methyltransferase (362 aa).

Positions 182, 210, 215, 231, and 293 each coordinate S-adenosyl-L-methionine. Cys318 serves as the catalytic Nucleophile. Catalysis depends on Glu352, which acts as the Proton acceptor.

It belongs to the class I-like SAM-binding methyltransferase superfamily. RNA M5U methyltransferase family. TrmA subfamily.

The catalysed reaction is uridine(54) in tRNA + S-adenosyl-L-methionine = 5-methyluridine(54) in tRNA + S-adenosyl-L-homocysteine + H(+). The enzyme catalyses uridine(341) in tmRNA + S-adenosyl-L-methionine = 5-methyluridine(341) in tmRNA + S-adenosyl-L-homocysteine + H(+). In terms of biological role, dual-specificity methyltransferase that catalyzes the formation of 5-methyluridine at position 54 (m5U54) in all tRNAs, and that of position 341 (m5U341) in tmRNA (transfer-mRNA). This chain is tRNA/tmRNA (uracil-C(5))-methyltransferase, found in Neisseria meningitidis serogroup B (strain ATCC BAA-335 / MC58).